The chain runs to 156 residues: ATP synthase subunit b (156 aa).

The chain crosses the membrane as a helical span at residues 12–32; it reads VAFFIFVLFCMKFVWPPVIAA.

This sequence belongs to the ATPase B chain family. As to quaternary structure, F-type ATPases have 2 components, F(1) - the catalytic core - and F(0) - the membrane proton channel. F(1) has five subunits: alpha(3), beta(3), gamma(1), delta(1), epsilon(1). F(0) has three main subunits: a(1), b(2) and c(10-14). The alpha and beta chains form an alternating ring which encloses part of the gamma chain. F(1) is attached to F(0) by a central stalk formed by the gamma and epsilon chains, while a peripheral stalk is formed by the delta and b chains.

Its subcellular location is the cell inner membrane. Functionally, f(1)F(0) ATP synthase produces ATP from ADP in the presence of a proton or sodium gradient. F-type ATPases consist of two structural domains, F(1) containing the extramembraneous catalytic core and F(0) containing the membrane proton channel, linked together by a central stalk and a peripheral stalk. During catalysis, ATP synthesis in the catalytic domain of F(1) is coupled via a rotary mechanism of the central stalk subunits to proton translocation. In terms of biological role, component of the F(0) channel, it forms part of the peripheral stalk, linking F(1) to F(0). This is ATP synthase subunit b from Pseudomonas paraeruginosa (strain DSM 24068 / PA7) (Pseudomonas aeruginosa (strain PA7)).